The chain runs to 734 residues: Meiotic driver SPOK1 (734 aa).

The stretch at 4 to 41 (KDRIAQLLRELEEAKARVEEAKAREAQERCEKERLQLE) forms a coiled coil. Disordered regions lie at residues 180 to 222 (ELTQ…ICSN) and 414 to 499 (LSSA…MADP). Residues 416–429 (SAPSSQNTDISEYT) show a composition bias toward polar residues. Residues 457–468 (NEHDEHDEDHSE) show a composition bias toward basic and acidic residues.

The protein localises to the cytoplasm. Its subcellular location is the nucleus. Its function is as follows. Promotes unequal transmission of alleles from the parental zygote to progeny spores by acting as poison/antidote system, leading to poisoning of progeny that do not inherit the allele. May possess DNA nuclease activity that leads to spore killing, and a kinase activity that confers resistance to the nuclease activity. Can suppress meiotic drive by the P.anserina SPOK2, SPOK3 and SPOK4 proteins. In Podospora comata, this protein is Meiotic driver SPOK1.